Reading from the N-terminus, the 384-residue chain is D-alanine--D-alanine ligase (384 aa).

One can recognise an ATP-grasp domain in the interval 167–374; sequence KKLFAAEGLP…YPTLLATMVD (208 aa). Residue 195–250 participates in ATP binding; it reads CERLSLPVFVKPARGGSSIGISRVSSWGQLPSAIAYARRHDPKVIVEAAVNGRELE. Mg(2+) is bound by residues Asp329, Glu341, and Asn343.

Belongs to the D-alanine--D-alanine ligase family. Mg(2+) is required as a cofactor. The cofactor is Mn(2+).

The protein localises to the cytoplasm. It carries out the reaction 2 D-alanine + ATP = D-alanyl-D-alanine + ADP + phosphate + H(+). The protein operates within cell wall biogenesis; peptidoglycan biosynthesis. Cell wall formation. The chain is D-alanine--D-alanine ligase from Mycobacterium leprae (strain TN).